Reading from the N-terminus, the 1172-residue chain is DNA-directed RNA polymerase subunit beta (1172 aa).

The protein belongs to the RNA polymerase beta chain family. As to quaternary structure, the RNAP catalytic core consists of 2 alpha, 1 beta, 1 beta' and 1 omega subunit. When a sigma factor is associated with the core the holoenzyme is formed, which can initiate transcription.

It carries out the reaction RNA(n) + a ribonucleoside 5'-triphosphate = RNA(n+1) + diphosphate. In terms of biological role, DNA-dependent RNA polymerase catalyzes the transcription of DNA into RNA using the four ribonucleoside triphosphates as substrates. The sequence is that of DNA-directed RNA polymerase subunit beta from Pseudothermotoga lettingae (strain ATCC BAA-301 / DSM 14385 / NBRC 107922 / TMO) (Thermotoga lettingae).